Reading from the N-terminus, the 310-residue chain is N-acyl-aromatic-L-amino acid amidohydrolase (carboxylate-forming) (310 aa).

Zn(2+) is bound by residues H20 and E23. Substrate contacts are provided by residues R62 and 69 to 70 (NR). H113 provides a ligand contact to Zn(2+). Substrate-binding residues include E176 and Y286.

The protein belongs to the AspA/AstE family. Aspartoacylase subfamily. In terms of assembly, homotetramer. The cofactor is Zn(2+).

It localises to the apical cell membrane. Its subcellular location is the cytoplasm. It carries out the reaction an N-acyl-aromatic L-alpha-amino acid + H2O = an aromatic L-alpha-amino acid + a carboxylate. It catalyses the reaction an N-acetyl-L-cysteine-S-conjugate + H2O = an S-substituted L-cysteine + acetate. Plays an important role in deacetylating mercapturic acids in kidney proximal tubules. The polypeptide is N-acyl-aromatic-L-amino acid amidohydrolase (carboxylate-forming) (acy3) (Xenopus tropicalis (Western clawed frog)).